A 186-amino-acid polypeptide reads, in one-letter code: UPF0301 protein LHK_02881 (186 aa).

It belongs to the UPF0301 (AlgH) family.

The protein is UPF0301 protein LHK_02881 of Laribacter hongkongensis (strain HLHK9).